The chain runs to 460 residues: Crocetin glucosyltransferase 2 (460 aa).

Histidine 19 acts as the Proton acceptor in catalysis. Residue histidine 19 coordinates an anthocyanidin. Positions 133, 333, 348, 351, 352, 353, 356, 372, and 373 each coordinate UDP-alpha-D-glucose.

Belongs to the UDP-glycosyltransferase family. Mainly expressed in fully developed stigmas.

The enzyme catalyses crocetin + UDP-alpha-D-glucose = beta-D-glucosyl crocetin + UDP. The catalysed reaction is beta-D-glucosyl crocetin + UDP-alpha-D-glucose = bis(beta-D-glucosyl) crocetin + UDP. It catalyses the reaction beta-D-gentiobiosyl crocetin + UDP-alpha-D-glucose = beta-D-gentiobiosyl beta-D-glucosyl crocetin + UDP. Functionally, crocetin glucosyltransferase involved in the synthesis of crocin, one of the apocarotenoids responsible for the color and bitter taste of saffron. In Crocus sativus (Saffron), this protein is Crocetin glucosyltransferase 2 (GLT2).